A 100-amino-acid chain; its full sequence is ATP synthase subunit c (100 aa).

Transmembrane regions (helical) follow at residues serine 27–glycine 47 and phenylalanine 72–valine 92.

Belongs to the ATPase C chain family. F-type ATPases have 2 components, F(1) - the catalytic core - and F(0) - the membrane proton channel. F(1) has five subunits: alpha(3), beta(3), gamma(1), delta(1), epsilon(1). F(0) has three main subunits: a(1), b(2) and c(10-14). The alpha and beta chains form an alternating ring which encloses part of the gamma chain. F(1) is attached to F(0) by a central stalk formed by the gamma and epsilon chains, while a peripheral stalk is formed by the delta and b chains.

Its subcellular location is the cell inner membrane. In terms of biological role, f(1)F(0) ATP synthase produces ATP from ADP in the presence of a proton or sodium gradient. F-type ATPases consist of two structural domains, F(1) containing the extramembraneous catalytic core and F(0) containing the membrane proton channel, linked together by a central stalk and a peripheral stalk. During catalysis, ATP synthesis in the catalytic domain of F(1) is coupled via a rotary mechanism of the central stalk subunits to proton translocation. Key component of the F(0) channel; it plays a direct role in translocation across the membrane. A homomeric c-ring of between 10-14 subunits forms the central stalk rotor element with the F(1) delta and epsilon subunits. This Campylobacter concisus (strain 13826) protein is ATP synthase subunit c.